A 365-amino-acid polypeptide reads, in one-letter code: uncharacterized protein (365 aa).

Disordered regions lie at residues 119 to 157 (ERSR…QQES), 216 to 298 (RPPG…DISH), and 313 to 365 (SHHH…LSVG). The span at 326–340 (SDPRIESRDLPERPQ) shows a compositional bias: basic and acidic residues.

This is an uncharacterized protein from Homo sapiens (Human).